The chain runs to 1729 residues: Zinc finger CCCH domain-containing protein 13 (1729 aa).

Disordered stretches follow at residues Met1 to Thr40 and Cys57 to Ile156. Positions Val10 to Arg23 are enriched in polar residues. The segment at Ser36–Ser64 adopts a C3H1-type zinc-finger fold. Phosphoserine is present on residues Ser64 and Ser77. Over residues Arg76–Glu136 the composition is skewed to basic and acidic residues. The stretch at His162–Glu196 forms a coiled coil. A Glycyl lysine isopeptide (Lys-Gly) (interchain with G-Cter in SUMO2) cross-link involves residue Lys179. Basic and acidic residues predominate over residues Gln182–Ile193. 2 disordered regions span residues Gln182 to Val528 and Asp581 to Asp1527. Phosphoserine occurs at positions 198, 207, 209, and 211. Residues Ser204 to Arg213 show a composition bias toward low complexity. Positions Lys214–Ser224 are enriched in basic residues. Residue Ser242 is modified to Phosphoserine. Positions Leu245–Asn254 are enriched in polar residues. Thr263 carries the post-translational modification Phosphothreonine. Residue Ser265 is modified to Phosphoserine. Over residues Lys283–Arg315 the composition is skewed to basic and acidic residues. A phosphoserine mark is found at Ser316, Ser318, Ser324, and Ser327. Over residues Gln321–Ser345 the composition is skewed to low complexity. 2 positions are modified to phosphothreonine: Thr353 and Thr363. Positions Tyr358–Arg368 are enriched in polar residues. 3 positions are modified to phosphoserine: Ser369, Ser371, and Ser380. 2 stretches are compositionally biased toward basic and acidic residues: residues Pro393 to Val528 and Asp581 to Ser636. Residues Thr639 to His654 are compositionally biased toward polar residues. Positions Asp655–Arg701 are enriched in basic and acidic residues. At Ser704 the chain carries Phosphoserine. Positions Ile706–Glu865 form a coiled coil. The span at Gly710–Lys897 shows a compositional bias: basic and acidic residues. A phosphoserine mark is found at Ser907, Ser909, Ser913, Ser921, Ser924, Ser929, Ser949, Ser951, and Ser953. Over residues His920–Arg938 the composition is skewed to basic and acidic residues. Positions Leu957–Lys1035 are enriched in basic and acidic residues. Residue Thr958 is modified to Phosphothreonine. Residues Lys1036–Lys1046 are compositionally biased toward basic residues. A compositionally biased stretch (basic and acidic residues) spans Lys1047 to Ser1065. A phosphoserine mark is found at Ser1069, Ser1086, Ser1090, and Ser1093. The segment covering Lys1072–Ser1086 has biased composition (basic residues). The residue at position 1109 (Thr1109) is a Phosphothreonine. Basic and acidic residues-rich tracts occupy residues Ile1114–Asn1137 and Pro1149–His1159. Low complexity-rich tracts occupy residues Thr1160–Leu1176 and Ala1184–Ser1218. Residues Ala1228–Arg1253 are compositionally biased toward basic and acidic residues. A phosphoserine mark is found at Ser1256, Ser1259, Ser1273, and Ser1275. The segment covering Ser1278–Ser1288 has biased composition (basic and acidic residues). Position 1295 is a phosphoserine (Ser1295). 2 stretches are compositionally biased toward basic and acidic residues: residues Gly1296–Val1351 and Asp1359–Phe1440. 7 positions are modified to phosphoserine: Ser1427, Ser1443, Ser1447, Ser1467, Ser1470, Ser1499, and Ser1526. Composition is skewed to basic and acidic residues over residues Ser1447 to Leu1482 and Asp1490 to Ser1499.

This sequence belongs to the ZC3H13 family. In terms of assembly, component of the WMM complex, a N6-methyltransferase complex composed of a catalytic subcomplex, named MAC, and of an associated subcomplex, named MACOM. The MAC subcomplex is composed of METTL3 and METTL14. The MACOM subcomplex is composed of WTAP, ZC3H13, CBLL1/HAKAI, VIRMA, and, in some cases of RBM15 (RBM15 or RBM15B). Also a component of a MACOM-like complex, named WTAP complex, composed of WTAP, ZC3H13, CBLL1/HAKAI, VIRMA, RBM15, BCLAF1 and THRAP3.

The protein resides in the nucleus speckle. Its subcellular location is the nucleus. It localises to the nucleoplasm. In terms of biological role, associated component of the WMM complex, a complex that mediates N6-methyladenosine (m6A) methylation of RNAs, a modification that plays a role in the efficiency of mRNA splicing and RNA processing. Acts as a key regulator of m6A methylation by promoting m6A methylation of mRNAs at the 3'-UTR. Controls embryonic stem cells (ESCs) pluripotency via its role in m6A methylation. In the WMM complex, anchors component of the MACOM subcomplex in the nucleus. Also required for bridging WTAP to the RNA-binding component RBM15 (RBM15 or RBM15B). In Mus musculus (Mouse), this protein is Zinc finger CCCH domain-containing protein 13.